Here is a 500-residue protein sequence, read N- to C-terminus: Hepatic triacylglycerol lipase (500 aa).

The first 21 residues, 1-21, serve as a signal peptide directing secretion; the sequence is MENPLCVSIFLFYCILIQSSA. Residues 23–44 are disordered; sequence GQSLGPESFGRRSRAAETNKTP. 2 N-linked (GlcNAc...) asparagine glycosylation sites follow: Asn67 and Asn78. Ser168 acts as the Nucleophile in catalysis. Catalysis depends on Asp194, which acts as the Charge relay system. The tract at residues 254–277 is essential for determining substrate specificity; it reads CHFLELYKHFAKHGLNAITRTVKC. His279 serves as the catalytic Charge relay system. In terms of domain architecture, PLAT spans 353-487; sequence YHYQFKIRFI…HPAREKTFVR (135 aa). Asn363 and Asn398 each carry an N-linked (GlcNAc...) asparagine glycan.

It belongs to the AB hydrolase superfamily. Lipase family. In terms of assembly, homodimer.

The protein localises to the secreted. It carries out the reaction a triacylglycerol + H2O = a diacylglycerol + a fatty acid + H(+). The catalysed reaction is a 1-acyl-sn-glycero-3-phosphocholine + H2O = sn-glycerol 3-phosphocholine + a fatty acid + H(+). It catalyses the reaction a 1,2-diacyl-sn-glycero-3-phosphocholine + H2O = a 2-acyl-sn-glycero-3-phosphocholine + a fatty acid + H(+). The enzyme catalyses 1,2,3-tri-(9Z-octadecenoyl)-glycerol + H2O = di-(9Z)-octadecenoylglycerol + (9Z)-octadecenoate + H(+). It carries out the reaction 1,2-di-(9Z-octadecenoyl)-sn-glycero-3-phosphocholine + H2O = (9Z-octadecenoyl)-sn-glycero-3-phosphocholine + (9Z)-octadecenoate + H(+). The catalysed reaction is 1,2,3-tributanoylglycerol + H2O = dibutanoylglycerol + butanoate + H(+). It catalyses the reaction 1,2-dihexadecanoyl-sn-glycero-3-phosphocholine + H2O = hexadecanoyl-sn-glycero-3-phosphocholine + hexadecanoate + H(+). The enzyme catalyses 1,2-di-(9Z-octadecenoyl)-sn-glycerol + H2O = 2-(9Z-octadecenoyl)-glycerol + (9Z)-octadecenoate + H(+). It carries out the reaction 1,2,3-tri-(9Z-octadecenoyl)-glycerol + H2O = 2,3-di-(9Z)-octadecenoyl-sn-glycerol + (9Z)-octadecenoate + H(+). The catalysed reaction is 1-(9Z-octadecenoyl)-sn-glycero-3-phospho-L-serine + H2O = sn-glycero-3-phospho-L-serine + (9Z)-octadecenoate + H(+). It catalyses the reaction 1-hexadecanoyl-sn-glycero-3-phosphocholine + H2O = sn-glycerol 3-phosphocholine + hexadecanoate + H(+). The enzyme catalyses 1,3-di-(9Z-octadecenoyl)-glycerol + H2O = 3-(9Z-octadecenoyl)-sn-glycerol + (9Z)-octadecenoate + H(+). In terms of biological role, catalyzes the hydrolysis of triglycerides and phospholipids present in circulating plasma lipoproteins, including chylomicrons, intermediate density lipoproteins (IDL), low density lipoproteins (LDL) of large size and high density lipoproteins (HDL), releasing free fatty acids (FFA) and smaller lipoprotein particles. Also exhibits lysophospholipase activity. Can hydrolyze both neutral lipid and phospholipid substrates but shows a greater binding affinity for neutral lipid substrates than phospholipid substrates. In native LDL, preferentially hydrolyzes the phosphatidylcholine species containing polyunsaturated fatty acids at sn-2 position. This is Hepatic triacylglycerol lipase (LIPC) from Bos taurus (Bovine).